We begin with the raw amino-acid sequence, 161 residues long: 2-C-methyl-D-erythritol 2,4-cyclodiphosphate synthase (161 aa).

A divalent metal cation-binding residues include Asp11 and His13. 4-CDP-2-C-methyl-D-erythritol 2-phosphate contacts are provided by residues 11–13 (DIH) and 37–38 (HS). His45 provides a ligand contact to a divalent metal cation. 4-CDP-2-C-methyl-D-erythritol 2-phosphate is bound by residues 59 to 61 (DIG), 135 to 138 (TTNE), and Arg145.

The protein belongs to the IspF family. As to quaternary structure, homotrimer. The cofactor is a divalent metal cation.

The catalysed reaction is 4-CDP-2-C-methyl-D-erythritol 2-phosphate = 2-C-methyl-D-erythritol 2,4-cyclic diphosphate + CMP. Its pathway is isoprenoid biosynthesis; isopentenyl diphosphate biosynthesis via DXP pathway; isopentenyl diphosphate from 1-deoxy-D-xylulose 5-phosphate: step 4/6. Its function is as follows. Involved in the biosynthesis of isopentenyl diphosphate (IPP) and dimethylallyl diphosphate (DMAPP), two major building blocks of isoprenoid compounds. Catalyzes the conversion of 4-diphosphocytidyl-2-C-methyl-D-erythritol 2-phosphate (CDP-ME2P) to 2-C-methyl-D-erythritol 2,4-cyclodiphosphate (ME-CPP) with a corresponding release of cytidine 5-monophosphate (CMP). The chain is 2-C-methyl-D-erythritol 2,4-cyclodiphosphate synthase from Thermosynechococcus vestitus (strain NIES-2133 / IAM M-273 / BP-1).